We begin with the raw amino-acid sequence, 154 residues long: Large ribosomal subunit protein uL22c (154 aa).

The protein belongs to the universal ribosomal protein uL22 family. In terms of assembly, part of the 50S ribosomal subunit.

It is found in the plastid. The protein resides in the chloroplast. Its function is as follows. This protein binds specifically to 23S rRNA. In terms of biological role, the globular domain of the protein is located near the polypeptide exit tunnel on the outside of the subunit, while an extended beta-hairpin is found that lines the wall of the exit tunnel in the center of the 70S ribosome. The protein is Large ribosomal subunit protein uL22c (rpl22) of Guizotia abyssinica (Niger).